Here is a 324-residue protein sequence, read N- to C-terminus: MTSTLIPKETSTPGGRDLRDARADYFFKLLLTAAVAFVLIALVSAALSMLWGGRQALQLQGVSFFYSTEWNPVENKYGALTPIYGTIVTALIAMLIAVPVSFGIAFFLTEVAPRWLRRPVGTAIELLAGIPSIIYGMWGLFVLVPVMTDYITPFLNDHIGTLPLIGTLFQGPPLGIGTLSAGFVLAIMVIPFISSIMREVFLTVPTQLKESAYALGSTKWEVSWNIVLPYTRSAVIGGMFLGLGRALGETMAVAFVIGNSVRLSPSLLTPGTTIAALIANDFGEATESYRSALLLLGFVLFIVTFAVLVIARLMLLRLSRKEGN.

The next 6 membrane-spanning stretches (helical) occupy residues 29–49 (LLLT…ALSM), 87–107 (IVTA…IAFF), 126–146 (LLAG…LVPV), 173–193 (PLGI…IPFI), 235–255 (VIGG…AVAF), and 291–311 (SALL…LVIA). Residues 83–311 (IYGTIVTALI…IVTFAVLVIA (229 aa)) enclose the ABC transmembrane type-1 domain.

This sequence belongs to the binding-protein-dependent transport system permease family. CysTW subfamily.

It is found in the cell inner membrane. Its function is as follows. Part of a binding-protein-dependent transport system for phosphate; probably responsible for the translocation of the substrate across the membrane. The chain is Phosphate transport system permease protein PstC (pstC) from Xylella fastidiosa (strain 9a5c).